We begin with the raw amino-acid sequence, 499 residues long: Cytochrome P450 76T24 (499 aa).

Residues 3–23 (VDILLSLVLAFFGWAAIYFLT) traverse the membrane as a helical segment. Residues N55, N76, N279, and N284 are each glycosylated (N-linked (GlcNAc...) asparagine). Position 442 (C442) interacts with heme.

It belongs to the cytochrome P450 family.

It is found in the membrane. The sequence is that of Cytochrome P450 76T24 from Catharanthus roseus (Madagascar periwinkle).